A 231-amino-acid polypeptide reads, in one-letter code: Large ribosomal subunit protein uL1 (231 aa).

This sequence belongs to the universal ribosomal protein uL1 family. Part of the 50S ribosomal subunit.

Its function is as follows. Binds directly to 23S rRNA. The L1 stalk is quite mobile in the ribosome, and is involved in E site tRNA release. In terms of biological role, protein L1 is also a translational repressor protein, it controls the translation of the L11 operon by binding to its mRNA. The sequence is that of Large ribosomal subunit protein uL1 from Cellvibrio japonicus (strain Ueda107) (Pseudomonas fluorescens subsp. cellulosa).